The chain runs to 831 residues: Translation initiation factor IF-2 (831 aa).

Residues 329 to 499 enclose the tr-type G domain; the sequence is TRAPVVTVMG…LLIAEMQDLK (171 aa). The segment at 338–345 is G1; sequence GHVDHGKT. Position 338-345 (338-345) interacts with GTP; the sequence is GHVDHGKT. The segment at 363 to 367 is G2; the sequence is GITQH. The tract at residues 385–388 is G3; sequence DTPG. GTP-binding positions include 385-389 and 439-442; these read DTPGH and NKID. Positions 439–442 are G4; the sequence is NKID. Residues 475 to 477 form a G5 region; sequence SAL.

This sequence belongs to the TRAFAC class translation factor GTPase superfamily. Classic translation factor GTPase family. IF-2 subfamily.

Its subcellular location is the cytoplasm. One of the essential components for the initiation of protein synthesis. Protects formylmethionyl-tRNA from spontaneous hydrolysis and promotes its binding to the 30S ribosomal subunits. Also involved in the hydrolysis of GTP during the formation of the 70S ribosomal complex. The sequence is that of Translation initiation factor IF-2 from Rickettsia massiliae (strain Mtu5).